Consider the following 253-residue polypeptide: RAD51-associated protein 1 (253 aa).

The segment at 32–51 (APLTKKSRTQPKEPKKENKK) is interaction with DNA. 3 disordered regions span residues 33-74 (PLTK…TSLD), 141-169 (DREH…EGND), and 184-244 (KKIK…WVPP). The span at 154 to 169 (PDEESEEDSDYREGND) shows a compositional bias: acidic residues. Over residues 184–195 (KKIKRQTRKEKK) the composition is skewed to basic residues. The interval 190–241 (TRKEKKTPKSENNTTVMELKSEQTQKMMSTSSEPVGRPLYTSSPVTNKKPKW) is interaction with DNA. The span at 199–222 (SENNTTVMELKSEQTQKMMSTSSE) shows a compositional bias: polar residues.

Monomer.

Its subcellular location is the chromosome. The protein localises to the nucleus. Its function is as follows. Structure-specific DNA-binding protein involved in DNA repair by promoting RAD51-mediated homologous recombination. Acts by stimulating D-Loop formation by RAD51: specifically enhances joint molecule formation through its structure-specific DNA interaction and its interaction with RAD51. Binds single-stranded DNA (ssDNA), double-stranded DNA (dsDNA) and secondary DNA structures, such as D-loop structures: has a strong preference for branched-DNA structures that are obligatory intermediates during joint molecule formation. Involved in mitotic recombination-dependent replication fork processing. Also involved in meiosis by promoting DMC1-mediated homologous meiotic recombination. The polypeptide is RAD51-associated protein 1 (Gallus gallus (Chicken)).